Consider the following 195-residue polypeptide: Large ribosomal subunit protein uL18 (195 aa).

The protein belongs to the universal ribosomal protein uL18 family. As to quaternary structure, part of the 50S ribosomal subunit. Contacts the 5S and 23S rRNAs.

Functionally, this is one of the proteins that bind and probably mediate the attachment of the 5S RNA into the large ribosomal subunit, where it forms part of the central protuberance. In Metallosphaera sedula (strain ATCC 51363 / DSM 5348 / JCM 9185 / NBRC 15509 / TH2), this protein is Large ribosomal subunit protein uL18.